The chain runs to 485 residues: Serine/threonine-protein kinase dst4 (485 aa).

Positions 21-278 constitute a Protein kinase domain; it reads FRVLEVIGQG…AVDLLNHPFI (258 aa). ATP-binding positions include 27–35 and Lys50; that span reads IGQGSFGVV. Asp142 (proton acceptor) is an active-site residue. Disordered stretches follow at residues 304–343, 360–424, and 436–485; these read RRKK…SAGL, VMRE…GSVV, and SMKL…NQDD. The segment covering 310–324 has biased composition (acidic residues); that stretch reads EEEAEEAEEGDDYDD. Low complexity predominate over residues 370 to 393; sequence SNNGGTFIYNNNNNNSSKTSSSGT. Acidic residues-rich tracts occupy residues 406-417 and 450-468; these read DDDDDDDIEEGG and SSDE…EEGG. Residues 474-485 are compositionally biased toward polar residues; sequence VVYTKSPVNQDD.

The protein belongs to the protein kinase superfamily. STE Ser/Thr protein kinase family. STE20 subfamily. Mg(2+) serves as cofactor.

It carries out the reaction L-seryl-[protein] + ATP = O-phospho-L-seryl-[protein] + ADP + H(+). The enzyme catalyses L-threonyl-[protein] + ATP = O-phospho-L-threonyl-[protein] + ADP + H(+). This Dictyostelium discoideum (Social amoeba) protein is Serine/threonine-protein kinase dst4.